The sequence spans 639 residues: Developmental regulatory protein wetA (639 aa).

Disordered regions lie at residues 65 to 97 (MDPS…EFDF), 206 to 369 (TTMR…SAAS), 418 to 552 (GLLI…SADE), and 587 to 613 (LMTG…RRRR). Positions 69 to 78 (HHHHHPHHHA) are enriched in basic residues. 2 stretches are compositionally biased toward polar residues: residues 81-90 (ESSTTSSGVS) and 214-226 (VSQT…SPSM). Positions 246–255 (RGRRAHRAHT) are enriched in basic residues. Composition is skewed to low complexity over residues 256 to 275 (QHAL…QAHQ), 346 to 369 (QQQW…SAAS), and 506 to 526 (HSSG…RVSV).

This sequence belongs to the wetA family.

In terms of biological role, brlA, abaA and wetA are pivotal regulators of conidiophore development and conidium maturation. They act individually and together to regulate their own expression and that of numerous other sporulation-specific genes. Acts as a crucial regulator of both conidiation capacity and conidial quality. Plays a role in virulence. In Beauveria bassiana (strain ARSEF 2860) (White muscardine disease fungus), this protein is Developmental regulatory protein wetA.